A 276-amino-acid chain; its full sequence is Large ribosomal subunit protein uL2 (276 aa).

Disordered regions lie at residues 36 to 58 and 214 to 276; these read PLHK…GGGH and LGKR…RRKK.

Belongs to the universal ribosomal protein uL2 family. In terms of assembly, part of the 50S ribosomal subunit. Forms a bridge to the 30S subunit in the 70S ribosome.

One of the primary rRNA binding proteins. Required for association of the 30S and 50S subunits to form the 70S ribosome, for tRNA binding and peptide bond formation. It has been suggested to have peptidyltransferase activity; this is somewhat controversial. Makes several contacts with the 16S rRNA in the 70S ribosome. The protein is Large ribosomal subunit protein uL2 of Halalkalibacterium halodurans (strain ATCC BAA-125 / DSM 18197 / FERM 7344 / JCM 9153 / C-125) (Bacillus halodurans).